Reading from the N-terminus, the 753-residue chain is Neuroendocrine convertase 1 (753 aa).

Positions 1 to 27 are cleaved as a signal peptide; that stretch reads MEQRGWTLQCTAFAFFCVWCALSSVKA. Residues 28 to 110 constitute a propeptide that is removed on maturation; sequence KRQFVNEWAA…QQYEKERSKR (83 aa). One can recognise a Peptidase S8 domain in the interval 129 to 450; the sequence is QWYLQDTRMT…FGLLNAKALV (322 aa). Residues aspartate 167 and histidine 208 each act as charge relay system in the active site. Cystine bridges form between cysteine 225-cysteine 374 and cysteine 317-cysteine 347. Catalysis depends on serine 382, which acts as the Charge relay system. An N-linked (GlcNAc...) asparagine glycan is attached at asparagine 401. In terms of domain architecture, P/Homo B spans 460–597; that stretch reads NVPEKKECVV…KLILHGTSSQ (138 aa). Cysteine 467 and cysteine 494 are oxidised to a cystine. Polar residues predominate over residues 633 to 651; sequence QKSLNGNLLVPKNSSSSNV. The interval 633–663 is disordered; that stretch reads QKSLNGNLLVPKNSSSSNVEGRRDEQVQGTP. Residue asparagine 645 is glycosylated (N-linked (GlcNAc...) asparagine).

The protein belongs to the peptidase S8 family. Furin subfamily. It depends on Ca(2+) as a cofactor.

It localises to the cytoplasmic vesicle. The protein resides in the secretory vesicle. The enzyme catalyses Release of protein hormones, neuropeptides and renin from their precursors, generally by hydrolysis of -Lys-Arg-|- bonds.. In terms of biological role, involved in the processing of hormone and other protein precursors at sites comprised of pairs of basic amino acid residues. Substrates include POMC, renin, enkephalin, dynorphin, somatostatin, insulin and AGRP. The chain is Neuroendocrine convertase 1 (Pcsk1) from Mus cookii (Cook's mouse).